Here is a 242-residue protein sequence, read N- to C-terminus: Small ribosomal subunit protein uS3 (242 aa).

The KH type-2 domain maps to 39–109; it reads IRQYVKATLA…QIRINVVEVT (71 aa). Positions 220–242 are disordered; the sequence is KVNQPKRRQQKRRQQYDDRSNEG. The span at 223–232 shows a compositional bias: basic residues; that stretch reads QPKRRQQKRR. The segment covering 233-242 has biased composition (basic and acidic residues); sequence QQYDDRSNEG.

The protein belongs to the universal ribosomal protein uS3 family. Part of the 30S ribosomal subunit. Forms a tight complex with proteins S10 and S14.

In terms of biological role, binds the lower part of the 30S subunit head. Binds mRNA in the 70S ribosome, positioning it for translation. This is Small ribosomal subunit protein uS3 from Trichodesmium erythraeum (strain IMS101).